A 90-amino-acid polypeptide reads, in one-letter code: Small ribosomal subunit protein uS15c (90 aa).

It belongs to the universal ribosomal protein uS15 family. As to quaternary structure, part of the 30S ribosomal subunit.

It localises to the plastid. The protein resides in the chloroplast. In Acorus calamus (Sweet flag), this protein is Small ribosomal subunit protein uS15c (rps15).